Consider the following 95-residue polypeptide: Co-chaperonin GroES (95 aa).

The protein belongs to the GroES chaperonin family. Heptamer of 7 subunits arranged in a ring. Interacts with the chaperonin GroEL.

It is found in the cytoplasm. Its function is as follows. Together with the chaperonin GroEL, plays an essential role in assisting protein folding. The GroEL-GroES system forms a nano-cage that allows encapsulation of the non-native substrate proteins and provides a physical environment optimized to promote and accelerate protein folding. GroES binds to the apical surface of the GroEL ring, thereby capping the opening of the GroEL channel. This Stenotrophomonas maltophilia (strain K279a) protein is Co-chaperonin GroES.